Here is a 1404-residue protein sequence, read N- to C-terminus: DNA-directed RNA polymerase subunit beta' (1404 aa).

4 residues coordinate Zn(2+): Cys70, Cys72, Cys85, and Cys88. Positions 460, 462, and 464 each coordinate Mg(2+). Residues Cys814, Cys889, Cys896, and Cys899 each coordinate Zn(2+). The disordered stretch occupies residues 1377–1404 (DSEMETLSGKPAAAEPVAAVADAGADEE). Residues 1387-1404 (PAAAEPVAAVADAGADEE) show a composition bias toward low complexity.

The protein belongs to the RNA polymerase beta' chain family. In terms of assembly, the RNAP catalytic core consists of 2 alpha, 1 beta, 1 beta' and 1 omega subunit. When a sigma factor is associated with the core the holoenzyme is formed, which can initiate transcription. Requires Mg(2+) as cofactor. Zn(2+) is required as a cofactor.

It carries out the reaction RNA(n) + a ribonucleoside 5'-triphosphate = RNA(n+1) + diphosphate. Its function is as follows. DNA-dependent RNA polymerase catalyzes the transcription of DNA into RNA using the four ribonucleoside triphosphates as substrates. This chain is DNA-directed RNA polymerase subunit beta', found in Xanthomonas euvesicatoria pv. vesicatoria (strain 85-10) (Xanthomonas campestris pv. vesicatoria).